The following is a 387-amino-acid chain: Aminodeoxyfutalosine synthase (387 aa).

The Radical SAM core domain occupies 52–279 (VHFNVNRHLN…ARTQMATGAE (228 aa)). [4Fe-4S] cluster contacts are provided by cysteine 66, cysteine 70, and cysteine 73.

It belongs to the radical SAM superfamily. MqnE family. [4Fe-4S] cluster is required as a cofactor.

It catalyses the reaction 3-[(1-carboxyvinyl)-oxy]benzoate + S-adenosyl-L-methionine + H2O = 6-amino-6-deoxyfutalosine + hydrogencarbonate + L-methionine + H(+). Its pathway is quinol/quinone metabolism; menaquinone biosynthesis. Functionally, radical SAM enzyme that catalyzes the addition of the adenosyl radical to the double bond of 3-[(1-carboxyvinyl)oxy]benzoate, leading to aminodeoxyfutalosine (AFL), a key intermediate in the formation of menaquinone (MK, vitamin K2) from chorismate. The protein is Aminodeoxyfutalosine synthase of Streptomyces coelicolor (strain ATCC BAA-471 / A3(2) / M145).